The chain runs to 314 residues: Epithelial cell adhesion molecule (314 aa).

The N-terminal stretch at 1–23 is a signal peptide; the sequence is MAPPQVLAFGLLLAAATAAVAAA. At 24-265 the chain is on the extracellular side; that stretch reads QQGCVCENYK…PPEFSMQGLQ (242 aa). 6 disulfide bridges follow: Cys27-Cys46, Cys29-Cys59, Cys38-Cys48, Cys66-Cys99, Cys110-Cys116, and Cys118-Cys135. Asn37 carries an N-linked (GlcNAc...) asparagine glycan. In terms of domain architecture, Thyroglobulin type-1 spans 63–135; that stretch reads ASKCLVMKAE…RTDKDSEISC (73 aa). An N-linked (GlcNAc...) asparagine glycan is attached at Asn111. Asn198 carries an N-linked (GlcNAc...) asparagine glycan. A helical transmembrane segment spans residues 266–288; that stretch reads AGIIAVIAVVAIAIVAGIIVLIV. Residues 289 to 314 lie on the Cytoplasmic side of the membrane; sequence STKKRRAKYEKAEIKEMGEMHRELNA.

This sequence belongs to the EPCAM family. As to quaternary structure, monomer. Interacts with phosphorylated CLDN7. Post-translationally, glycosylation at Asn-198 is crucial for protein stability.

It is found in the lateral cell membrane. The protein resides in the cell junction. Its subcellular location is the tight junction. Functionally, may act as a physical homophilic interaction molecule between intestinal epithelial cells (IECs) and intraepithelial lymphocytes (IELs) at the mucosal epithelium for providing immunological barrier as a first line of defense against mucosal infection. Plays a role in embryonic stem cells proliferation and differentiation. Up-regulates the expression of FABP5, MYC and cyclins A and E. The sequence is that of Epithelial cell adhesion molecule (TACSTD1) from Sus scrofa (Pig).